Consider the following 786-residue polypeptide: MGSGGVVHCRCAKCFCYPTKRRIRRRPRNLTILSLPEDVLFHILKWLSVEDILAVRAVHSQLKDLVDNHASVWACASFQELWPSPGNLKLFERAAEKGNFEAAVKLGIAYLYNEGLSVSDEARAEVNGLKASRFFSLAERLNVGAAPFIWLFIRPPWSVSGSCCKAVVHESLRAECQLQRTHKASILHCLGRVLSLFEDEEKQQQAHDLFEEAAHQGCLTSSYLLWESDRRTDVSDPGRCLHSFRKLRDYAAKGCWEAQLSLAKACANANQLGLEVRASSEIVCQLFQASQAVSKQQVFSVQKGLNDTMRYILIDWLVEVATMKDFTSLCLHLTVECVDRYLRRRLVPRYRLQLLGIACMVICTRFISKEILTIREAVWLTDNTYKYEDLVRMMGEIVSALEGKIRVPTVVDYKEVLLTLVPVELRTQHLCSFLCELSLLHTSLSAYAPARLAAAALLLARLTHGQTQPWTTQLWDLTGFSYEDLIPCVLSLHKKCFHDDAPKDYRQVSLTAVKQRFEDKRYGEISQEEVLSYSQLCAALGVTQDSPDPPTFLSTGEIHAFLSSPSGRRTKRKRENSLQEDRGSFVTTPTAELSSQEETLLGSFLDWSLDCCSGYEGDQESEGEKEGDVTAPSGILDVTVVYLNPEQHCCQESSDEEACPEDKGPQDPQALALDTQIPATPGPKPLVRTSREPGKDVTTSGYSSVSTASPTSSVDGGLGALPQPTSVLSLDSDSHTQPCHHQARKSCLQCRPPSPPESSVPQQQVKRINLCIHSEEEDMNLGLVRL.

The Nuclear localization signal 1 signature appears at 20–28 (KRRIRRRPR). In terms of domain architecture, F-box spans 29–76 (NLTILSLPEDVLFHILKWLSVEDILAVRAVHSQLKDLVDNHASVWACA). In terms of domain architecture, Cyclin N-terminal spans 288–405 (QASQAVSKQQ…EIVSALEGKI (118 aa)). 4 consecutive short sequence motifs (d box) follow at residues 310–313 (RYIL), 343–346 (RRRL), 349–352 (RYRL), and 351–354 (RLQL). 2 disordered regions span residues 564-593 (SPSGRRTKRKRENSLQEDRGSFVTTPTAEL) and 675-738 (TQIP…HTQP). The Nuclear localization signal 2 motif lies at 568 to 574 (RRTKRKR). The tract at residues 582–766 (RGSFVTTPTA…ESSVPQQQVK (185 aa)) is PEST. A compositionally biased stretch (low complexity) spans 697 to 714 (VTTSGYSSVSTASPTSSV). The span at 723–738 (QPTSVLSLDSDSHTQP) shows a compositional bias: polar residues. Residues 767–770 (RINL) carry the D box 5 motif.

It belongs to the cyclin family. Cyclin AB subfamily. In terms of assembly, component of the SCF(CCNF) complex consisting of CUL1, RBX1, SKP1 and CCNF. Interacts with SKP1. Interacts with CUL1. Interacts with CCNB1; interaction is required for nuclear localization of CCNB1. Interacts with CCP110; this interaction leads to CCP110 ubiquitination and degradation via the proteasome pathway. Interacts (via the Cyclin N-terminal domain) with MYBL2/BMYB. Interacts with FZR1/CDH1 (via N-terminus). Interacts with RRM2 (via Cy motif and when phosphorylated at 'Thr-33'); the interaction occurs exclusively in G2 and early M. Interacts with CDC6 (via Cy motif); the interaction takes place during G2 and M phase. Degraded when the spindle assembly checkpoint is activated during the G2-M transition. Degradation depends on the C-terminal PEST sequence. Post-translationally, phosphorylated just before cells enter into mitosis. In terms of processing, ubiquitinated by the anaphase-promoting complex (APC/C); leading to its degradation by the proteasome. Widely expressed, with expression detected in the heart, brain, placenta, lung, liver, skeletal muscle, kidney and pancreas.

Its subcellular location is the nucleus. The protein resides in the cytoplasm. It localises to the perinuclear region. The protein localises to the cytoskeleton. It is found in the microtubule organizing center. Its subcellular location is the centrosome. The protein resides in the centriole. In terms of biological role, substrate recognition component of a SCF (SKP1-CUL1-F-box protein) E3 ubiquitin-protein ligase complex which mediates the ubiquitination and subsequent proteasomal degradation of target proteins. The SCF(CCNF) E3 ubiquitin-protein ligase complex is an integral component of the ubiquitin proteasome system (UPS) and links proteasome degradation to the cell cycle. Mediates the substrate recognition and the proteasomal degradation of various target proteins involved in the regulation of cell cycle progression and in the maintenance of genome stability. Mediates the ubiquitination and proteasomal degradation of CP110 during G2 phase, thereby acting as an inhibitor of centrosome reduplication. In G2, mediates the ubiquitination and subsequent degradation of ribonucleotide reductase RRM2, thereby maintaining a balanced pool of dNTPs and genome integrity. In G2, mediates the ubiquitination and proteasomal degradation of CDC6, thereby suppressing DNA re-replication and preventing genome instability. Involved in the ubiquitination and degradation of the substrate adapter CDH1 of the anaphase-promoting complex (APC/C), thereby acting as an antagonist of APC/C in regulating G1 progression and S phase entry. May play a role in the G2 cell cycle checkpoint control after DNA damage, possibly by promoting the ubiquitination of MYBL2/BMYB. This Homo sapiens (Human) protein is Cyclin-F (CCNF).